The following is a 179-amino-acid chain: Large ribosomal subunit protein uL6 (179 aa).

The protein belongs to the universal ribosomal protein uL6 family. Part of the 50S ribosomal subunit.

Functionally, this protein binds to the 23S rRNA, and is important in its secondary structure. It is located near the subunit interface in the base of the L7/L12 stalk, and near the tRNA binding site of the peptidyltransferase center. The polypeptide is Large ribosomal subunit protein uL6 (Chloroherpeton thalassium (strain ATCC 35110 / GB-78)).